An 88-amino-acid chain; its full sequence is uncharacterized protein (88 aa).

This is an uncharacterized protein from Thermoproteus tenax virus 1 (strain KRA1) (TTV1).